A 92-amino-acid chain; its full sequence is Phospholemman (92 aa).

An N-terminal signal peptide occupies residues 1–20 (MASLSHILVLCVGLLAMVNA). Residues 21-35 (EAPQEHDPFTYDYQS) are Extracellular-facing. The chain crosses the membrane as a helical span at residues 36-56 (LRIGGLIIAGILFILGILIVL). Topologically, residues 57 to 92 (SRRCRCKFNQQQRTGEPDEEEGTFRSSIRRLSTRRR) are cytoplasmic. The S-palmitoyl cysteine moiety is linked to residue Cys-60. Cys-62 bears the S-glutathionyl cysteine; alternate mark. Cys-62 carries S-palmitoyl cysteine; alternate lipidation. Positions 65-92 (NQQQRTGEPDEEEGTFRSSIRRLSTRRR) are disordered. Thr-79 is subject to Phosphothreonine. A Phosphoserine modification is found at Ser-82. Position 83 is a phosphoserine; by PKA and PKC (Ser-83). The span at 83 to 92 (SIRRLSTRRR) shows a compositional bias: basic residues. Ser-88 is subject to Phosphoserine; by PKA. Thr-89 is modified (phosphothreonine; by PKC).

Belongs to the FXYD family. In terms of assembly, homotetramer. Monomer. Regulatory subunit of the sodium/potassium-transporting ATPase (NKA) which is composed of a catalytic alpha subunit, an auxiliary non-catalytic beta subunit and an additional regulatory subunit. The monomeric form associates with NKA while the oligomeric form does not. Interacts with the catalytic alpha-1 subunit ATP1A1. Also interacts with the catalytic alpha-2 and alpha-3 subunits ATP1A2 and ATP1A3. Very little interaction with ATP1A1, ATP1A2 or ATP1A3 when phosphorylated at Ser-83. Interacts with the non-catalytic beta-1 subunit ATP1B1. Oxidative stress decreases interaction with ATP1A1 but increases interaction with ATP1B1. Post-translationally, major plasma membrane substrate for cAMP-dependent protein kinase (PKA) and protein kinase C (PKC) in several different tissues. Phosphorylated in response to insulin and adrenergic stimulation. Phosphorylation at Ser-88 stimulates sodium/potassium-transporting ATPase activity while the unphosphorylated form inhibits sodium/potassium-transporting ATPase activity. Phosphorylation increases tetramerization, decreases binding to ATP1A1 and reduces inhibition of ATP1A1 activity. Phosphorylation at Ser-83 leads to greatly reduced interaction with ATP1A1, ATP1A2 and ATP1A3. May be phosphorylated by DMPK. In terms of processing, palmitoylation increases half-life and stability and is enhanced upon phosphorylation at Ser-88 by PKA. In terms of tissue distribution, in the brain, detected in cerebellum and choroid plexus (at protein level).

It is found in the cell membrane. The protein localises to the sarcolemma. Its subcellular location is the apical cell membrane. It localises to the membrane. The protein resides in the caveola. It is found in the T-tubule. Functionally, associates with and regulates the activity of the sodium/potassium-transporting ATPase (NKA) which transports Na(+) out of the cell and K(+) into the cell. Inhibits NKA activity in its unphosphorylated state and stimulates activity when phosphorylated. Reduces glutathionylation of the NKA beta-1 subunit ATP1B1, thus reversing glutathionylation-mediated inhibition of ATP1B1. Contributes to female sexual development by maintaining the excitability of neurons which secrete gonadotropin-releasing hormone. The protein is Phospholemman of Bos taurus (Bovine).